The chain runs to 143 residues: Subtelomeric hrmA-associated cluster protein cgnA (143 aa).

G-Q-I/R/S repeat units follow at residues 11 to 13 (GQI), 14 to 16 (GPI), 17 to 19 (GQR), 20 to 22 (GQS), 23 to 25 (GQR), 26 to 28 (GQS), 29 to 31 (GQR), 32 to 34 (GQS), 35 to 37 (GQI), 38 to 40 (GQS), 41 to 43 (GQS), 44 to 46 (GQS), 47 to 49 (GQI), 50 to 52 (GQI), 53 to 55 (GQI), 56 to 58 (GQI), 59 to 61 (GQI), 62 to 64 (GQI), 65 to 67 (GQI), 68 to 70 (GQI), 71 to 73 (GQI), 74 to 76 (GQI), 77 to 79 (GQI), 80 to 82 (GQI), 83 to 85 (GQI), 86 to 88 (GQI), 89 to 91 (GQI), 92 to 94 (GQI), and 95 to 97 (GQA). Residues 11-68 (GQIGPIGQRGQSGQRGQSGQRGQSGQIGQSGQSGQSGQIGQIGQIGQIGQIGQIGQIG) form the Collagen-like domain. The 29 X 3 AA approximate tandem repeats of G-Q-I/R/S stretch occupies residues 11–97 (GQIGPIGQRG…IGQIGQIGQA (87 aa)). Residues 16–49 (IGQRGQSGQRGQSGQRGQSGQIGQSGQSGQSGQI) form a disordered region.

The protein localises to the secreted. Functionally, collagen-like protein; part of the subtelomeric hrmA-associated cluster (HAC) containing genes that alter the hyphal surface (such as reduced total chitin or increased beta-glucan exposure) and perturb inter-hyphal interactions within the developing biofilms, resulting in a loss of vertically aligned polarized growing filaments. Consequently, this hypoxia-typic morphotype (called H-MORPH) with altered biofilm architecture leads to increased hypoxia fitness, increased host inflammation, rapid disease progression, and mortality in a murine model of invasive aspergillosis. CgnA is directly involved in the reduction of total surface chitin and the increase of beta-glucan exposure, and mediates the detachment of the extracellular matrix and especially of its component galactosaminogalactan (GAG). The chain is Subtelomeric hrmA-associated cluster protein cgnA from Aspergillus fumigatus (strain ATCC MYA-4609 / CBS 101355 / FGSC A1100 / Af293) (Neosartorya fumigata).